We begin with the raw amino-acid sequence, 178 residues long: Ribosome maturation factor RimM (178 aa).

The PRC barrel domain occupies 99–178 (QGEFYWRDLI…EITVDWDPGF (80 aa)).

It belongs to the RimM family. As to quaternary structure, binds ribosomal protein uS19.

Its subcellular location is the cytoplasm. Functionally, an accessory protein needed during the final step in the assembly of 30S ribosomal subunit, possibly for assembly of the head region. Essential for efficient processing of 16S rRNA. May be needed both before and after RbfA during the maturation of 16S rRNA. It has affinity for free ribosomal 30S subunits but not for 70S ribosomes. This Pseudoalteromonas translucida (strain TAC 125) protein is Ribosome maturation factor RimM.